Consider the following 156-residue polypeptide: Small ribosomal subunit protein uS7 (156 aa).

Belongs to the universal ribosomal protein uS7 family. In terms of assembly, part of the 30S ribosomal subunit. Contacts proteins S9 and S11.

One of the primary rRNA binding proteins, it binds directly to 16S rRNA where it nucleates assembly of the head domain of the 30S subunit. Is located at the subunit interface close to the decoding center, probably blocks exit of the E-site tRNA. The sequence is that of Small ribosomal subunit protein uS7 from Alcanivorax borkumensis (strain ATCC 700651 / DSM 11573 / NCIMB 13689 / SK2).